Consider the following 428-residue polypeptide: Glutamate-1-semialdehyde 2,1-aminomutase (428 aa).

Lys-265 is modified (N6-(pyridoxal phosphate)lysine).

This sequence belongs to the class-III pyridoxal-phosphate-dependent aminotransferase family. HemL subfamily. In terms of assembly, homodimer. Pyridoxal 5'-phosphate is required as a cofactor.

The protein localises to the cytoplasm. The enzyme catalyses (S)-4-amino-5-oxopentanoate = 5-aminolevulinate. The protein operates within porphyrin-containing compound metabolism; protoporphyrin-IX biosynthesis; 5-aminolevulinate from L-glutamyl-tRNA(Glu): step 2/2. The chain is Glutamate-1-semialdehyde 2,1-aminomutase from Legionella pneumophila (strain Paris).